The chain runs to 480 residues: UDP-glucose 6-dehydrogenase 3 (480 aa).

NAD(+) is bound by residues 8 to 13 (GAGYVG), aspartate 33, arginine 38, 86 to 90 (VNTPT), 127 to 128 (ST), and glutamate 161. Substrate is bound by residues 157 to 161 (EFLAE), 216 to 223 (KLAANAFL), and 256 to 269 (RIGP…VGFG). Cysteine 272 (nucleophile) is an active-site residue. NAD(+) is bound at residue 272–275 (CFQK). 334-335 (FK) is a substrate binding site. Arginine 342 is an NAD(+) binding site. A substrate-binding site is contributed by arginine 447.

It belongs to the UDP-glucose/GDP-mannose dehydrogenase family.

It catalyses the reaction UDP-alpha-D-glucose + 2 NAD(+) + H2O = UDP-alpha-D-glucuronate + 2 NADH + 3 H(+). Its pathway is nucleotide-sugar biosynthesis; UDP-alpha-D-glucuronate biosynthesis; UDP-alpha-D-glucuronate from UDP-alpha-D-glucose: step 1/1. Inhibited by UDP-xylose. Its function is as follows. Involved in the biosynthesis of UDP-glucuronic acid (UDP-GlcA), providing nucleotide sugars for cell-wall polymers. Required for the formation of cell wall ingrowths on the outer cell walls of nematode-induced syncytia. The protein is UDP-glucose 6-dehydrogenase 3 (UGD3) of Arabidopsis thaliana (Mouse-ear cress).